A 164-amino-acid polypeptide reads, in one-letter code: NAD(P)H-quinone oxidoreductase subunit I, chloroplastic (164 aa).

4Fe-4S ferredoxin-type domains follow at residues 55 to 84 (GRIHFEFDKCIACEVCVRVCPIDLPVVDWK) and 95 to 124 (LNYSIDFGICIFCGNCVEYCPTNCLSMTEE). Cysteine 64, cysteine 67, cysteine 70, cysteine 74, cysteine 104, cysteine 107, cysteine 110, and cysteine 114 together coordinate [4Fe-4S] cluster.

It belongs to the complex I 23 kDa subunit family. In terms of assembly, NDH is composed of at least 16 different subunits, 5 of which are encoded in the nucleus. [4Fe-4S] cluster is required as a cofactor.

It localises to the plastid. It is found in the chloroplast thylakoid membrane. The enzyme catalyses a plastoquinone + NADH + (n+1) H(+)(in) = a plastoquinol + NAD(+) + n H(+)(out). It catalyses the reaction a plastoquinone + NADPH + (n+1) H(+)(in) = a plastoquinol + NADP(+) + n H(+)(out). Its function is as follows. NDH shuttles electrons from NAD(P)H:plastoquinone, via FMN and iron-sulfur (Fe-S) centers, to quinones in the photosynthetic chain and possibly in a chloroplast respiratory chain. The immediate electron acceptor for the enzyme in this species is believed to be plastoquinone. Couples the redox reaction to proton translocation, and thus conserves the redox energy in a proton gradient. This Daucus carota (Wild carrot) protein is NAD(P)H-quinone oxidoreductase subunit I, chloroplastic.